We begin with the raw amino-acid sequence, 238 residues long: Small ribosomal subunit protein uS3 (238 aa).

The 69-residue stretch at 39-107 (MREFIHDYAK…ELHLNIVEIR (69 aa)) folds into the KH type-2 domain. Basic and acidic residues predominate over residues 212–222 (PQAHDRRHSEA). Residues 212–238 (PQAHDRRHSEAQEGAAPRPPRRDRERA) are disordered.

It belongs to the universal ribosomal protein uS3 family. In terms of assembly, part of the 30S ribosomal subunit. Forms a tight complex with proteins S10 and S14.

Its function is as follows. Binds the lower part of the 30S subunit head. Binds mRNA in the 70S ribosome, positioning it for translation. The chain is Small ribosomal subunit protein uS3 from Cereibacter sphaeroides (strain ATCC 17025 / ATH 2.4.3) (Rhodobacter sphaeroides).